Consider the following 507-residue polypeptide: Histidine ammonia-lyase (507 aa).

The 5-imidazolinone (Ala-Gly) cross-link spans 141-143; it reads ASG. Serine 142 carries the 2,3-didehydroalanine (Ser) modification.

This sequence belongs to the PAL/histidase family. In terms of processing, contains an active site 4-methylidene-imidazol-5-one (MIO), which is formed autocatalytically by cyclization and dehydration of residues Ala-Ser-Gly.

It localises to the cytoplasm. It carries out the reaction L-histidine = trans-urocanate + NH4(+). It functions in the pathway amino-acid degradation; L-histidine degradation into L-glutamate; N-formimidoyl-L-glutamate from L-histidine: step 1/3. This is Histidine ammonia-lyase from Burkholderia ambifaria (strain MC40-6).